Reading from the N-terminus, the 526-residue chain is Exodeoxyribonuclease 7 large subunit (526 aa).

Positions 497 to 526 are disordered; the sequence is AMTTEGGTPPAGAKKRSTKPAEPPKQGSLF.

It belongs to the XseA family. In terms of assembly, heterooligomer composed of large and small subunits.

The protein localises to the cytoplasm. The catalysed reaction is Exonucleolytic cleavage in either 5'- to 3'- or 3'- to 5'-direction to yield nucleoside 5'-phosphates.. In terms of biological role, bidirectionally degrades single-stranded DNA into large acid-insoluble oligonucleotides, which are then degraded further into small acid-soluble oligonucleotides. The chain is Exodeoxyribonuclease 7 large subunit from Rhizobium johnstonii (strain DSM 114642 / LMG 32736 / 3841) (Rhizobium leguminosarum bv. viciae).